We begin with the raw amino-acid sequence, 684 residues long: DNA-directed RNA polymerase subunit beta' (684 aa).

Cysteine 69, cysteine 71, cysteine 87, and cysteine 90 together coordinate Zn(2+). Mg(2+) contacts are provided by aspartate 491, aspartate 493, and aspartate 495.

Belongs to the RNA polymerase beta' chain family. RpoC1 subfamily. In terms of assembly, in plastids the minimal PEP RNA polymerase catalytic core is composed of four subunits: alpha, beta, beta', and beta''. When a (nuclear-encoded) sigma factor is associated with the core the holoenzyme is formed, which can initiate transcription. Requires Mg(2+) as cofactor. The cofactor is Zn(2+).

Its subcellular location is the plastid. It is found in the chloroplast. The catalysed reaction is RNA(n) + a ribonucleoside 5'-triphosphate = RNA(n+1) + diphosphate. DNA-dependent RNA polymerase catalyzes the transcription of DNA into RNA using the four ribonucleoside triphosphates as substrates. The sequence is that of DNA-directed RNA polymerase subunit beta' from Phaseolus vulgaris (Kidney bean).